The primary structure comprises 102 residues: Large ribosomal subunit protein bL21 (102 aa).

It belongs to the bacterial ribosomal protein bL21 family. In terms of assembly, part of the 50S ribosomal subunit. Contacts protein L20.

This protein binds to 23S rRNA in the presence of protein L20. This chain is Large ribosomal subunit protein bL21, found in Ehrlichia ruminantium (strain Welgevonden).